Here is a 121-residue protein sequence, read N- to C-terminus: Large ribosomal subunit protein eL18 (121 aa).

Belongs to the eukaryotic ribosomal protein eL18 family.

This is Large ribosomal subunit protein eL18 from Methanospirillum hungatei JF-1 (strain ATCC 27890 / DSM 864 / NBRC 100397 / JF-1).